A 233-amino-acid polypeptide reads, in one-letter code: Coproporphyrinogen-III oxidase 2, chloroplastic (233 aa).

The transit peptide at Met1–Ser48 directs the protein to the chloroplast. Residue Ser174 participates in substrate binding. His188 (proton donor) is an active-site residue.

It belongs to the aerobic coproporphyrinogen-III oxidase family. Homodimer.

Its subcellular location is the plastid. It is found in the chloroplast. The enzyme catalyses coproporphyrinogen III + O2 + 2 H(+) = protoporphyrinogen IX + 2 CO2 + 2 H2O. Its pathway is porphyrin-containing compound metabolism; protoporphyrin-IX biosynthesis; protoporphyrinogen-IX from coproporphyrinogen-III (O2 route): step 1/1. It functions in the pathway porphyrin-containing compound metabolism; chlorophyll biosynthesis. Its function is as follows. Key enzyme in heme biosynthesis. Catalyzes the oxidative decarboxylation of propionic acid side chains of rings A and B of coproporphyrinogen III. In Arabidopsis thaliana (Mouse-ear cress), this protein is Coproporphyrinogen-III oxidase 2, chloroplastic (CPX2).